Consider the following 217-residue polypeptide: Monomethylamine corrinoid protein 1 (217 aa).

Residues 1–91 (MANQEIFDKL…ELEKNKKEGE (91 aa)) enclose the B12-binding N-terminal domain. Positions 93–217 (AGLAITFVAE…AAKVALEVMK (125 aa)) constitute a B12-binding domain. Histidine 106 contributes to the methylcob(III)alamin binding site.

In terms of assembly, can form a complex with MtmB.

The protein operates within one-carbon metabolism; methanogenesis from methylamine. Functionally, acts as a methyl group carrier between MtmB and MtbA. The chain is Monomethylamine corrinoid protein 1 (mtmC1) from Methanosarcina barkeri.